The primary structure comprises 535 residues: Peptide chain release factor 3 (535 aa).

The 271-residue stretch at 8-278 (ARRRTFAIIS…VDQAPAPGPR (271 aa)) folds into the tr-type G domain. GTP is bound by residues 17–24 (SHPDAGKT), 85–89 (DTPGH), and 139–142 (NKLD).

It belongs to the TRAFAC class translation factor GTPase superfamily. Classic translation factor GTPase family. PrfC subfamily.

The protein localises to the cytoplasm. In terms of biological role, increases the formation of ribosomal termination complexes and stimulates activities of RF-1 and RF-2. It binds guanine nucleotides and has strong preference for UGA stop codons. It may interact directly with the ribosome. The stimulation of RF-1 and RF-2 is significantly reduced by GTP and GDP, but not by GMP. The polypeptide is Peptide chain release factor 3 (Bordetella parapertussis (strain 12822 / ATCC BAA-587 / NCTC 13253)).